We begin with the raw amino-acid sequence, 352 residues long: Nicotinate-nucleotide--dimethylbenzimidazole phosphoribosyltransferase (352 aa).

Glutamate 318 (proton acceptor) is an active-site residue.

This sequence belongs to the CobT family.

The enzyme catalyses 5,6-dimethylbenzimidazole + nicotinate beta-D-ribonucleotide = alpha-ribazole 5'-phosphate + nicotinate + H(+). It functions in the pathway nucleoside biosynthesis; alpha-ribazole biosynthesis; alpha-ribazole from 5,6-dimethylbenzimidazole: step 1/2. In terms of biological role, catalyzes the synthesis of alpha-ribazole-5'-phosphate from nicotinate mononucleotide (NAMN) and 5,6-dimethylbenzimidazole (DMB). This chain is Nicotinate-nucleotide--dimethylbenzimidazole phosphoribosyltransferase, found in Azotobacter vinelandii (strain DJ / ATCC BAA-1303).